The following is a 188-amino-acid chain: Adenine phosphoribosyltransferase (188 aa).

This sequence belongs to the purine/pyrimidine phosphoribosyltransferase family. In terms of assembly, homodimer.

The protein resides in the cytoplasm. The enzyme catalyses AMP + diphosphate = 5-phospho-alpha-D-ribose 1-diphosphate + adenine. The protein operates within purine metabolism; AMP biosynthesis via salvage pathway; AMP from adenine: step 1/1. In terms of biological role, catalyzes a salvage reaction resulting in the formation of AMP, that is energically less costly than de novo synthesis. The chain is Adenine phosphoribosyltransferase from Paraburkholderia xenovorans (strain LB400).